The sequence spans 823 residues: MSIVQKQEEMNGCGLNVDKVEAFTVSPQEKGRKNKRKLADPSQPNASSLTEFPPYELPSLKPQNHLSGNGSVGEVSNQLQVEVSESVEWDDPFACHLEELLSSNLLTLFLDTMKQLIDLGYTDDEVLKAVSRCRLYCGGNNLLSNIVNNTLSALKTGDEGAGSGDYVFEDLQQLVSYTLVEMISLIKEVRPSLSTVEAMWRLLMCDLNVLQAFEAEGDGLVSSSKLSDSESLGAESNPPKSSDPDNPKPPQSDPQSNRNEPLKFGNFPNTPNSKKTQSSGTTPGKEVCSGSTVSCQGMRSTSFTLVSDEKLVSCRKGRTKKEIAMLRQKSCVEKIRTYSKGSGYKAAKFASVGSFLLEKRVKSSSEFVPRNSSSKITAEIGVKVSLAEDSGCFVRKNSKLDSPVVVVDAKGYITALPARSVKSASKKKTGSESVTLIPSASEKKSDSSIPSTSEKKSGSESEEKASVSAKLAPDYYAGIPYDAALGIYVPRDKKDELILKLVPRVNDLQNELQVWTDWANQKVKEATGRLLKDQPELKALRKEREEAEQYKKEKQLLEENTRKRLSEMDFALKNATSQLEKAFNTAHRLELEQSILKKEMEAAKIKAVESAESFREAKERGERSLKDIHSWEGQKIMLQEELKGQREKVTVLQKEVTKAKNRQNQIEAALKQERTAKGKLSAQASLIRKETKELEALGKVEEERIKGKAETDVKYYIDNIKRLEREISELKLKSDYSRIIALKKGSSESKATKRESLGMPKVKRERECVMCLSEEMSVIFLPCAHQVLCFKCNQLHEKEGMMDCPSCRGTIHRRIQARFARSG.

Disordered regions lie at residues 24–72 (TVSP…NGSV), 224–291 (SKLS…CSGS), and 432–464 (ESVT…SEEK). The segment covering 61-72 (KPQNHLSGNGSV) has biased composition (polar residues). Residues 224 to 240 (SKLSDSESLGAESNPPK) show a composition bias toward low complexity. Residues 267–282 (FPNTPNSKKTQSSGTT) show a composition bias toward polar residues. Positions 453-464 (SEKKSGSESEEK) are enriched in basic and acidic residues. Positions 536–738 (ELKALRKERE…ELKLKSDYSR (203 aa)) form a coiled coil. The RING-type zinc finger occupies 768–808 (CVMCLSEEMSVIFLPCAHQVLCFKCNQLHEKEGMMDCPSCR).

This sequence belongs to the RING-type zinc finger family.

The catalysed reaction is S-ubiquitinyl-[E2 ubiquitin-conjugating enzyme]-L-cysteine + [acceptor protein]-L-lysine = [E2 ubiquitin-conjugating enzyme]-L-cysteine + N(6)-ubiquitinyl-[acceptor protein]-L-lysine.. Its pathway is protein modification; protein ubiquitination. This Arabidopsis thaliana (Mouse-ear cress) protein is Putative E3 ubiquitin-protein ligase RF4 (RF4).